The sequence spans 471 residues: Putative multidrug resistance protein MdtD (471 aa).

At 1–11 (MTELPDSTRWQ) the chain is on the periplasmic side. A helical transmembrane segment spans residues 12–32 (LWIVAFGFFMQSLDTTIVNTA). The Cytoplasmic segment spans residues 33 to 48 (LPSMAQSLGESPLHMH). Residues 49-69 (MVIVSYVLTVAVMLPASGWLA) traverse the membrane as a helical segment. Topologically, residues 70-76 (DKVGVRN) are periplasmic. Residues 77–97 (IFFTAIVLFTLGSLFCALSGT) form a helical membrane-spanning segment. Over 98–101 (LNEL) the chain is Cytoplasmic. A helical membrane pass occupies residues 102-124 (LLARALQGVGGAMMVPVGRLTVM). Over 125-137 (KIVPREQYMAAMT) the chain is Periplasmic. A helical transmembrane segment spans residues 138 to 158 (FVTLPGQVGPLLGPALGGLLV). The Cytoplasmic segment spans residues 159-164 (EYASWH). The helical transmembrane segment at 165 to 185 (WIFLINIPVGIIGAIATLLLM) threads the bilayer. The Periplasmic segment spans residues 186–196 (PNYTMQTRRFD). The chain crosses the membrane as a helical span at residues 197–217 (LSGFLLLAVGMAVLTLALDGS). Over 218–224 (KGTGLSP) the chain is Cytoplasmic. A helical membrane pass occupies residues 225-245 (LAIAGLVAVGVVALVLYLLHA). At 246 to 262 (RNNNRALFSLKLFRTRT) the chain is on the periplasmic side. The chain crosses the membrane as a helical span at residues 263 to 283 (FSLGLAGSFAGRIGSGMLPFM). Residues 284-285 (TP) are Cytoplasmic-facing. Residues 286–306 (VFLQIGLGFSPFHAGLMMIPM) form a helical membrane-spanning segment. The Periplasmic segment spans residues 307–341 (VLGSMGMKRIVVQVVNRFGYRRVLVATTLGLSLIT). A helical transmembrane segment spans residues 342–362 (LLFMTTALLGWYYVLPFVLFL). At 363-395 (QGMVNSTRFSSMNTLTLKDLPDNLASSGNSLLS) the chain is on the cytoplasmic side. The chain crosses the membrane as a helical span at residues 396 to 416 (MIMQLSMSIGVTIAGLLLGLF). Over 417 to 430 (GSQHVSVDSGTTQT) the chain is Periplasmic. The chain crosses the membrane as a helical span at residues 431–451 (VFMYTWLSMAFIIALPAFIFA). The Cytoplasmic segment spans residues 452 to 471 (RVPNDTHQNVAISRRKRSAQ).

It belongs to the major facilitator superfamily. TCR/Tet family.

Its subcellular location is the cell inner membrane. The polypeptide is Putative multidrug resistance protein MdtD (Shigella sonnei (strain Ss046)).